The following is a 984-amino-acid chain: Ephrin type-A receptor 3 (984 aa).

A signal peptide spans Met1–Arg20. Topologically, residues Glu21–His541 are extracellular. Residues Glu29 to Lys207 form the Eph LBD domain. N-linked (GlcNAc...) asparagine glycosylation is found at Asn232, Asn337, Asn391, Asn404, and Asn493. Fibronectin type-III domains lie at Pro325–Ala435 and Ala436–Ser532. A helical transmembrane segment spans residues Val542 to Gly565. Topologically, residues Arg566–Val984 are cytoplasmic. Residues Tyr597 and Tyr603 each carry the phosphotyrosine; by autocatalysis modification. The 262-residue stretch at Ile622–Ile883 folds into the Protein kinase domain. Residues Gly629–Gly634, Lys654, and Glu701–Ser707 contribute to the ATP site. Tyr702 is subject to Phosphotyrosine; by autocatalysis. Catalysis depends on Asp747, which acts as the Proton acceptor. ATP is bound at residue Arg751–Asn752. Position 780 is a phosphotyrosine; by autocatalysis (Tyr780). The SAM domain maps to Ala912–Gln976. Tyr938 carries the phosphotyrosine modification. The PDZ-binding signature appears at Val982–Val984.

It belongs to the protein kinase superfamily. Tyr protein kinase family. Ephrin receptor subfamily. Heterotetramer upon binding of the ligand. The heterotetramer is composed of an ephrin dimer and a receptor dimer. Oligomerization is probably required to induce biological responses. Forms a ternary EFNA5-EPHA3-ADAM10 complex mediating EFNA5 extracellular domain shedding by ADAM10 which regulates the EFNA5-EPHA3 complex internalization and function. Interacts (phosphorylated) with PTPN1; dephosphorylates EPHA3 and may regulate its trafficking and function. Interacts (phosphorylated) with CRK; mediates EFNA5-EPHA3 signaling through RHOA GTPase activation. Interacts with NCK1 (via SH2 domain); mediates EFNA5-EPHA3 signaling. Autophosphorylates upon activation by EFNA5. Phosphorylation on Tyr-603 mediates interaction with NCK1. Dephosphorylated by PTPN1. In terms of tissue distribution, most abundant in the heart, brain and lung.

The protein localises to the cell membrane. The catalysed reaction is L-tyrosyl-[protein] + ATP = O-phospho-L-tyrosyl-[protein] + ADP + H(+). Functionally, receptor tyrosine kinase which binds promiscuously membrane-bound ephrin family ligands residing on adjacent cells, leading to contact-dependent bidirectional signaling into neighboring cells. The signaling pathway downstream of the receptor is referred to as forward signaling while the signaling pathway downstream of the ephrin ligand is referred to as reverse signaling. Highly promiscuous for ephrin-A ligands it binds preferentially EFNA5. Upon activation by EFNA5 regulates cell-cell adhesion, cytoskeletal organization and cell migration. Plays a role in cardiac cells migration and differentiation and regulates the formation of the atrioventricular canal and septum during development probably through activation by EFNA1. Involved in the retinotectal mapping of neurons. May also control the segregation but not the guidance of motor and sensory axons during neuromuscular circuit development. In Rattus norvegicus (Rat), this protein is Ephrin type-A receptor 3 (Epha3).